Reading from the N-terminus, the 104-residue chain is BLOC-1-related complex subunit 7 (104 aa).

It belongs to the BORCS7 family.

Its subcellular location is the lysosome membrane. Its function is as follows. As part of a BORC-like complex may play a role in lysosomes movement and localization at the cell periphery. Associated with the cytosolic face of lysosomes, this complex may couple lysosomes to microtubule plus-end-directed kinesin motor. The polypeptide is BLOC-1-related complex subunit 7 (Xenopus tropicalis (Western clawed frog)).